We begin with the raw amino-acid sequence, 527 residues long: Bromodomain-containing protein 9 (527 aa).

The span at 1–16 (MNVSVTKRRKKKKKKK) shows a compositional bias: basic residues. The segment at 1–54 (MNVSVTKRRKKKKKKKSEKEKDKYLDEDERRRRKEEKKRKREKEQCDSEGETEV) is disordered. Basic and acidic residues predominate over residues 17-30 (SEKEKDKYLDEDER). The segment covering 31-41 (RRRKEEKKRKR) has biased composition (basic residues). The region spanning 78-182 (NESTPLQQLL…HTGFKMMSKA (105 aa)) is the Bromo domain. The interval 156-158 (TYN) is histone H4K5ac H4K8ac and histone H4K5bu H4K8bu binding. Residues 468-478 (DFHDVHNDRGG) are compositionally biased toward basic and acidic residues. A disordered region spans residues 468 to 527 (DFHDVHNDRGGSRPSSSSSMSNNSERDHHLGSPSRISVGEQQDIHDPYEFLQSPETDNQN). Residues 479-490 (SRPSSSSSMSNN) show a composition bias toward low complexity.

As to quaternary structure, binds acetylated histones H3 and H4. Binds butyrylated histone H4.

The protein localises to the nucleus. Functionally, plays a role in chromatin remodeling and regulation of transcription. Acts as a chromatin reader that recognizes and binds acylated histones: binds histones that are acetylated and/or butyrylated. This Xenopus laevis (African clawed frog) protein is Bromodomain-containing protein 9 (brd9).